Reading from the N-terminus, the 298-residue chain is Acetylglutamate kinase (298 aa).

Residues 69 to 70, Arg91, and Asn196 each bind substrate; that span reads GG.

The protein belongs to the acetylglutamate kinase family. ArgB subfamily.

The protein localises to the cytoplasm. The enzyme catalyses N-acetyl-L-glutamate + ATP = N-acetyl-L-glutamyl 5-phosphate + ADP. It participates in amino-acid biosynthesis; L-arginine biosynthesis; N(2)-acetyl-L-ornithine from L-glutamate: step 2/4. In terms of biological role, catalyzes the ATP-dependent phosphorylation of N-acetyl-L-glutamate. This Nitrobacter hamburgensis (strain DSM 10229 / NCIMB 13809 / X14) protein is Acetylglutamate kinase.